The chain runs to 944 residues: Lactoferrin-binding protein A (944 aa).

Residues 1 to 27 (MNKKHGFSLTLTALAIAAAFPSYAANP) form the signal peptide. The TBDR plug domain maps to 52 to 178 (RRSKEATGLG…LGGAVAFRTK (127 aa)). The region spanning 189–944 (SWGIQAKTAY…NFSLALEMKF (756 aa)) is the TBDR beta-barrel domain. The TonB C-terminal box signature appears at 927–944 (GRYAAPGRNFSLALEMKF).

The protein belongs to the TonB-dependent receptor family.

It is found in the cell outer membrane. Functionally, unknown. May be an iron-siderophore receptor. The sequence is that of Lactoferrin-binding protein A (lbpA) from Neisseria meningitidis serogroup A / serotype 4A (strain DSM 15465 / Z2491).